The chain runs to 706 residues: MARTTPINRYRNIGICAHVDAGKTTTTERVLFYTGVNHKLGEVHDGAATTDWMVQEQERGITITSAAVTTFWKGSRGQYDNYRVNVIDTPGHVDFTIEVERSLRVLDGAVVVFCGTSGVEPQSETVWRQANKYGVPRIVYVNKMDRQGANFLRVVEQIKKRLGHTPVPVQLAIGAEENFVGQVDLIKMKAIYWNDDDKGMTYREEEIPAELKDLAEEWRSSMVEAAAEANEELMNKYLEEGELSEAEIKEGLRLRTLACEIVPAVCGSSFKNKGVPLVLDAVIDYLPAPTEIPAIKGVSPDDETVEDERHADDNEPFSSLAFKIATDPFVGTLTFARVYSGVLSSGDSVLNSVKGKKERVGRMVQMHANQREEIKEVRAGDIAALIGMKDVTTGDTLCSIEKPIILERMDFPEPVISVAVEPKTKADQEKMGIALGKLAQEDPSFRVKTDEESGQTIISGMGELHLDIIVDRMKREFGVEANIGKPQVAYRETITKDNVEIEGKFVRQSGGRGQFGHCWIRFSAADVDEKGNITEGLVFENEVVGGVVPKEYIPAIQKGIEEQMKNGVVAGYPLIGLKATVFDGSYHDVDSNEMAFKIAASMATKQLAQKGGGKVLEPIMKVEVVTPEDYMGDVMGDLNRRRGLIQGMEDTVSGKVIRAEVPLGEMFGYATDVRSMSQGRASYSMEFSKYAEAPSNIVEALVKKQG.

Residues 8 to 290 (NRYRNIGICA…AVIDYLPAPT (283 aa)) form the tr-type G domain. Residues 17–24 (AHVDAGKT), 88–92 (DTPGH), and 142–145 (NKMD) contribute to the GTP site.

Belongs to the TRAFAC class translation factor GTPase superfamily. Classic translation factor GTPase family. EF-G/EF-2 subfamily.

The protein localises to the cytoplasm. In terms of biological role, catalyzes the GTP-dependent ribosomal translocation step during translation elongation. During this step, the ribosome changes from the pre-translocational (PRE) to the post-translocational (POST) state as the newly formed A-site-bound peptidyl-tRNA and P-site-bound deacylated tRNA move to the P and E sites, respectively. Catalyzes the coordinated movement of the two tRNA molecules, the mRNA and conformational changes in the ribosome. The polypeptide is Elongation factor G 1 (Pseudomonas aeruginosa (strain ATCC 15692 / DSM 22644 / CIP 104116 / JCM 14847 / LMG 12228 / 1C / PRS 101 / PAO1)).